The sequence spans 257 residues: Uracil phosphoribosyltransferase (257 aa).

5-phospho-alpha-D-ribose 1-diphosphate-binding positions include arginine 77, arginine 102, and 129 to 137 (DPMLATGGS). Residues isoleucine 192 and 197-199 (GDA) each bind uracil. Residue aspartate 198 participates in 5-phospho-alpha-D-ribose 1-diphosphate binding. Positions 203 to 257 (QFGPNLFTSSAPSRPEAPAGRGRAAAKTPGRRSARSESPSSTSPSARSRKAAPPA) are disordered. Low complexity-rich tracts occupy residues 211-230 (SSAPSRPEAPAGRGRAAAKT) and 238-248 (SESPSSTSPSA).

This sequence belongs to the UPRTase family. Requires Mg(2+) as cofactor.

The catalysed reaction is UMP + diphosphate = 5-phospho-alpha-D-ribose 1-diphosphate + uracil. The protein operates within pyrimidine metabolism; UMP biosynthesis via salvage pathway; UMP from uracil: step 1/1. Its activity is regulated as follows. Allosterically activated by GTP. Its function is as follows. Catalyzes the conversion of uracil and 5-phospho-alpha-D-ribose 1-diphosphate (PRPP) to UMP and diphosphate. The polypeptide is Uracil phosphoribosyltransferase (Mycolicibacterium paratuberculosis (strain ATCC BAA-968 / K-10) (Mycobacterium paratuberculosis)).